A 76-amino-acid polypeptide reads, in one-letter code: Putative defensin-like protein 184 (76 aa).

Residues 1–21 (MKNSSILFVLIIVVFLISSSG) form the signal peptide. Disulfide bonds link cysteine 32–cysteine 76, cysteine 38–cysteine 58, cysteine 44–cysteine 70, and cysteine 48–cysteine 72.

This sequence belongs to the DEFL family.

Its subcellular location is the secreted. In Arabidopsis thaliana (Mouse-ear cress), this protein is Putative defensin-like protein 184 (LCR18).